The primary structure comprises 315 residues: Thioredoxin reductase (315 aa).

FAD is bound at residue 34–41 (EGQKVGGQ). Cys134 and Cys137 are oxidised to a cystine. 282–291 (DIRVKSLRQV) provides a ligand contact to FAD.

It belongs to the class-II pyridine nucleotide-disulfide oxidoreductase family. In terms of assembly, homodimer. FAD is required as a cofactor.

Its subcellular location is the cytoplasm. It carries out the reaction [thioredoxin]-dithiol + NADP(+) = [thioredoxin]-disulfide + NADPH + H(+). This is Thioredoxin reductase (trxB) from Peptoclostridium acidaminophilum (Eubacterium acidaminophilum).